Here is a 673-residue protein sequence, read N- to C-terminus: DNA ligase (673 aa).

NAD(+) is bound by residues 33–37, 83–84, and E117; these read DHQYD and SL. K119 serves as the catalytic N6-AMP-lysine intermediate. NAD(+) is bound by residues R140, E175, K282, and K306. Zn(2+)-binding residues include C400, C403, C418, and C424. The 82-residue stretch at 592–673 folds into the BRCT domain; it reads RGSSAISGKT…WVKMVEDARS (82 aa).

The protein belongs to the NAD-dependent DNA ligase family. LigA subfamily. The cofactor is Mg(2+). It depends on Mn(2+) as a cofactor.

It catalyses the reaction NAD(+) + (deoxyribonucleotide)n-3'-hydroxyl + 5'-phospho-(deoxyribonucleotide)m = (deoxyribonucleotide)n+m + AMP + beta-nicotinamide D-nucleotide.. In terms of biological role, DNA ligase that catalyzes the formation of phosphodiester linkages between 5'-phosphoryl and 3'-hydroxyl groups in double-stranded DNA using NAD as a coenzyme and as the energy source for the reaction. It is essential for DNA replication and repair of damaged DNA. The protein is DNA ligase of Anaplasma marginale (strain Florida).